A 508-amino-acid chain; its full sequence is Photosystem II CP47 reaction center protein (508 aa).

Transmembrane regions (helical) follow at residues 21 to 36 (SVHIMHTALVAGWAGS), 101 to 115 (IVLSGLCFLAAIWHW), 140 to 156 (GIHLFLSGVACFGFGAF), 203 to 218 (IAAGTLGILAGLFHLS), 237 to 252 (VLSSSIAAVFFAAFVV), and 457 to 472 (SFALLFFFGHIWHGAR).

The protein belongs to the PsbB/PsbC family. PsbB subfamily. In terms of assembly, PSII is composed of 1 copy each of membrane proteins PsbA, PsbB, PsbC, PsbD, PsbE, PsbF, PsbH, PsbI, PsbJ, PsbK, PsbL, PsbM, PsbT, PsbX, PsbY, PsbZ, Psb30/Ycf12, at least 3 peripheral proteins of the oxygen-evolving complex and a large number of cofactors. It forms dimeric complexes. It depends on Binds multiple chlorophylls. PSII binds additional chlorophylls, carotenoids and specific lipids. as a cofactor.

The protein localises to the plastid. Its subcellular location is the chloroplast thylakoid membrane. Functionally, one of the components of the core complex of photosystem II (PSII). It binds chlorophyll and helps catalyze the primary light-induced photochemical processes of PSII. PSII is a light-driven water:plastoquinone oxidoreductase, using light energy to abstract electrons from H(2)O, generating O(2) and a proton gradient subsequently used for ATP formation. This is Photosystem II CP47 reaction center protein from Pelargonium hortorum (Common geranium).